Here is a 267-residue protein sequence, read N- to C-terminus: uncharacterized protein (267 aa).

Residues serine 210 and serine 224 each carry the phosphoserine modification.

As to expression, testis. Down-regulated in men with spermatocyte arrest.

Functionally, essential for normal spermatogenesis and male fertility. This is an uncharacterized protein from Homo sapiens (Human).